We begin with the raw amino-acid sequence, 277 residues long: Release factor glutamine methyltransferase (277 aa).

Residues 117-121 (GTGCG), aspartate 140, tryptophan 168, and asparagine 182 each bind S-adenosyl-L-methionine. 182 to 185 (NPPY) lines the substrate pocket.

It belongs to the protein N5-glutamine methyltransferase family. PrmC subfamily.

The catalysed reaction is L-glutaminyl-[peptide chain release factor] + S-adenosyl-L-methionine = N(5)-methyl-L-glutaminyl-[peptide chain release factor] + S-adenosyl-L-homocysteine + H(+). Its function is as follows. Methylates the class 1 translation termination release factors RF1/PrfA and RF2/PrfB on the glutamine residue of the universally conserved GGQ motif. The sequence is that of Release factor glutamine methyltransferase from Buchnera aphidicola subsp. Acyrthosiphon pisum (strain APS) (Acyrthosiphon pisum symbiotic bacterium).